A 285-amino-acid polypeptide reads, in one-letter code: Ribosomal RNA small subunit methyltransferase A (285 aa).

Residues N21, L23, G48, E69, D94, and N127 each contribute to the S-adenosyl-L-methionine site.

This sequence belongs to the class I-like SAM-binding methyltransferase superfamily. rRNA adenine N(6)-methyltransferase family. RsmA subfamily.

It localises to the cytoplasm. The enzyme catalyses adenosine(1518)/adenosine(1519) in 16S rRNA + 4 S-adenosyl-L-methionine = N(6)-dimethyladenosine(1518)/N(6)-dimethyladenosine(1519) in 16S rRNA + 4 S-adenosyl-L-homocysteine + 4 H(+). Specifically dimethylates two adjacent adenosines (A1518 and A1519) in the loop of a conserved hairpin near the 3'-end of 16S rRNA in the 30S particle. May play a critical role in biogenesis of 30S subunits. In Koribacter versatilis (strain Ellin345), this protein is Ribosomal RNA small subunit methyltransferase A.